A 287-amino-acid polypeptide reads, in one-letter code: Undecaprenyl-diphosphatase (287 aa).

8 consecutive transmembrane segments (helical) span residues 1 to 21 (MALW…FLPV), 49 to 69 (MILF…VVFA), 101 to 121 (LFLL…TLKA), 126 to 146 (VFAN…LLFW), 160 to 180 (TGVG…MPGL), 203 to 223 (YSFF…AIEV), 232 to 252 (VSVA…IVSL), and 267 to 287 (FSFY…DLPI).

Belongs to the UppP family.

The protein resides in the cell inner membrane. The enzyme catalyses di-trans,octa-cis-undecaprenyl diphosphate + H2O = di-trans,octa-cis-undecaprenyl phosphate + phosphate + H(+). In terms of biological role, catalyzes the dephosphorylation of undecaprenyl diphosphate (UPP). Confers resistance to bacitracin. The chain is Undecaprenyl-diphosphatase from Halorhodospira halophila (strain DSM 244 / SL1) (Ectothiorhodospira halophila (strain DSM 244 / SL1)).